The chain runs to 99 residues: Small ribosomal subunit protein bS21 (99 aa).

A disordered region spans residues 60–99 (KKLQREGLLPMKPKPVFGAGPGGDRRGPGAGPGAGPRPAR).

This sequence belongs to the bacterial ribosomal protein bS21 family.

This chain is Small ribosomal subunit protein bS21, found in Rhodopseudomonas palustris (strain BisA53).